We begin with the raw amino-acid sequence, 488 residues long: GTPase Der (488 aa).

EngA-type G domains lie at 3-166 (PVIA…PRDP) and 193-366 (IKIA…MSAV). Residues 9-16 (GRPNVGKS), 56-60 (DTGGI), 118-121 (NKID), 199-206 (GRPNVGKS), 246-250 (DTAGV), and 311-314 (NKWD) each bind GTP. Residues 367–451 (TRWPTSRLTQ…PIRIEYKGGD (85 aa)) form the KH-like domain. Over residues 449-461 (GGDNPFEGKKNTL) the composition is skewed to basic and acidic residues. A disordered region spans residues 449 to 488 (GGDNPFEGKKNTLTDRQVNKKRRLMSHHKKAEKKRRDKRK). Positions 467–488 (NKKRRLMSHHKKAEKKRRDKRK) are enriched in basic residues.

It belongs to the TRAFAC class TrmE-Era-EngA-EngB-Septin-like GTPase superfamily. EngA (Der) GTPase family. Associates with the 50S ribosomal subunit.

Its function is as follows. GTPase that plays an essential role in the late steps of ribosome biogenesis. This chain is GTPase Der, found in Pseudomonas entomophila (strain L48).